We begin with the raw amino-acid sequence, 634 residues long: Heat shock 70-related protein 1, mitochondrial (634 aa).

The N-terminal 20 residues, Met-1–His-20, are a transit peptide targeting the mitochondrion. Positions Ser-538–Ala-614 form a coiled coil.

It belongs to the heat shock protein 70 family.

It is found in the mitochondrion. The sequence is that of Heat shock 70-related protein 1, mitochondrial (HSP70.1) from Leishmania major.